A 166-amino-acid polypeptide reads, in one-letter code: Large ribosomal subunit protein uL10 (166 aa).

It belongs to the universal ribosomal protein uL10 family. As to quaternary structure, part of the ribosomal stalk of the 50S ribosomal subunit. The N-terminus interacts with L11 and the large rRNA to form the base of the stalk. The C-terminus forms an elongated spine to which L12 dimers bind in a sequential fashion forming a multimeric L10(L12)X complex.

In terms of biological role, forms part of the ribosomal stalk, playing a central role in the interaction of the ribosome with GTP-bound translation factors. In Aeromonas hydrophila subsp. hydrophila (strain ATCC 7966 / DSM 30187 / BCRC 13018 / CCUG 14551 / JCM 1027 / KCTC 2358 / NCIMB 9240 / NCTC 8049), this protein is Large ribosomal subunit protein uL10.